The following is a 721-amino-acid chain: 1,4-alpha-glucan branching enzyme GlgB (721 aa).

The active-site Nucleophile is the aspartate 404. The active-site Proton donor is glutamate 457.

This sequence belongs to the glycosyl hydrolase 13 family. GlgB subfamily. In terms of assembly, monomer.

The catalysed reaction is Transfers a segment of a (1-&gt;4)-alpha-D-glucan chain to a primary hydroxy group in a similar glucan chain.. Its pathway is glycan biosynthesis; glycogen biosynthesis. In terms of biological role, catalyzes the formation of the alpha-1,6-glucosidic linkages in glycogen by scission of a 1,4-alpha-linked oligosaccharide from growing alpha-1,4-glucan chains and the subsequent attachment of the oligosaccharide to the alpha-1,6 position. The protein is 1,4-alpha-glucan branching enzyme GlgB of Bradyrhizobium diazoefficiens (strain JCM 10833 / BCRC 13528 / IAM 13628 / NBRC 14792 / USDA 110).